We begin with the raw amino-acid sequence, 835 residues long: Phenylalanine--tRNA ligase beta subunit (835 aa).

In terms of domain architecture, tRNA-binding spans 44-158; sequence GPVDGPLTVG…LPGADGADVL (115 aa). Residues 414 to 493 enclose the B5 domain; sequence WSLPPIRIAV…RLEGLEVIRS (80 aa). D471, D477, E480, and E481 together coordinate Mg(2+). The region spanning 741-834 is the FDX-ACB domain; it reads SPFPAVLQDV…AAERVGATLR (94 aa).

Belongs to the phenylalanyl-tRNA synthetase beta subunit family. Type 1 subfamily. In terms of assembly, tetramer of two alpha and two beta subunits. The cofactor is Mg(2+).

It localises to the cytoplasm. The catalysed reaction is tRNA(Phe) + L-phenylalanine + ATP = L-phenylalanyl-tRNA(Phe) + AMP + diphosphate + H(+). The chain is Phenylalanine--tRNA ligase beta subunit from Mycobacterium leprae (strain TN).